The following is a 354-amino-acid chain: UDP-N-acetylglucosamine--N-acetylmuramyl-(pentapeptide) pyrophosphoryl-undecaprenol N-acetylglucosamine transferase (354 aa).

UDP-N-acetyl-alpha-D-glucosamine is bound by residues 13 to 15, asparagine 125, arginine 161, serine 189, isoleucine 242, 261 to 266, and glutamine 286; these read SGG and ALTVSE.

This sequence belongs to the glycosyltransferase 28 family. MurG subfamily.

The protein resides in the cell inner membrane. It carries out the reaction di-trans,octa-cis-undecaprenyl diphospho-N-acetyl-alpha-D-muramoyl-L-alanyl-D-glutamyl-meso-2,6-diaminopimeloyl-D-alanyl-D-alanine + UDP-N-acetyl-alpha-D-glucosamine = di-trans,octa-cis-undecaprenyl diphospho-[N-acetyl-alpha-D-glucosaminyl-(1-&gt;4)]-N-acetyl-alpha-D-muramoyl-L-alanyl-D-glutamyl-meso-2,6-diaminopimeloyl-D-alanyl-D-alanine + UDP + H(+). It participates in cell wall biogenesis; peptidoglycan biosynthesis. Functionally, cell wall formation. Catalyzes the transfer of a GlcNAc subunit on undecaprenyl-pyrophosphoryl-MurNAc-pentapeptide (lipid intermediate I) to form undecaprenyl-pyrophosphoryl-MurNAc-(pentapeptide)GlcNAc (lipid intermediate II). This chain is UDP-N-acetylglucosamine--N-acetylmuramyl-(pentapeptide) pyrophosphoryl-undecaprenol N-acetylglucosamine transferase, found in Buchnera aphidicola subsp. Schizaphis graminum (strain Sg).